Reading from the N-terminus, the 518-residue chain is Dihydropyrimidinase 2 (518 aa).

His-59, His-61, and Lys-152 together coordinate Zn(2+). Lys-152 carries the post-translational modification N6-carboxylysine. Tyr-157 contacts substrate. Zn(2+)-binding residues include His-185 and His-241. Substrate is bound at residue Ser-291. Asp-319 serves as a coordination point for Zn(2+). Asn-340 is a substrate binding site.

The protein belongs to the metallo-dependent hydrolases superfamily. Hydantoinase/dihydropyrimidinase family. In terms of assembly, homotetramer. Zn(2+) serves as cofactor. Post-translationally, carboxylation allows a single lysine to coordinate two zinc ions.

It catalyses the reaction 5,6-dihydrouracil + H2O = 3-(carbamoylamino)propanoate + H(+). This Caenorhabditis briggsae protein is Dihydropyrimidinase 2 (dhp-2).